We begin with the raw amino-acid sequence, 369 residues long: ATP-dependent 6-phosphofructokinase (369 aa).

Residues glycine 15, 81-82 (KG), and 108-111 (GDGS) contribute to the ATP site. Mg(2+) is bound at residue aspartate 109. Substrate is bound by residues 132–134 (TID), arginine 169, 176–178 (MGR), glutamate 230, arginine 266, and 272–275 (HIQR). Aspartate 134 functions as the Proton acceptor in the catalytic mechanism.

Belongs to the phosphofructokinase type A (PFKA) family. Mixed-substrate PFK group III subfamily. In terms of assembly, homodimer or homotetramer. The cofactor is Mg(2+).

It is found in the cytoplasm. The catalysed reaction is beta-D-fructose 6-phosphate + ATP = beta-D-fructose 1,6-bisphosphate + ADP + H(+). Its pathway is carbohydrate degradation; glycolysis; D-glyceraldehyde 3-phosphate and glycerone phosphate from D-glucose: step 3/4. Catalyzes the phosphorylation of D-fructose 6-phosphate to fructose 1,6-bisphosphate by ATP, the first committing step of glycolysis. In Thermosynechococcus vestitus (strain NIES-2133 / IAM M-273 / BP-1), this protein is ATP-dependent 6-phosphofructokinase.